Reading from the N-terminus, the 223-residue chain is Deoxyribose-phosphate aldolase (223 aa).

D89 acts as the Proton donor/acceptor in catalysis. Catalysis depends on K152, which acts as the Schiff-base intermediate with acetaldehyde. K181 acts as the Proton donor/acceptor in catalysis.

The protein belongs to the DeoC/FbaB aldolase family. DeoC type 1 subfamily.

The protein localises to the cytoplasm. The catalysed reaction is 2-deoxy-D-ribose 5-phosphate = D-glyceraldehyde 3-phosphate + acetaldehyde. The protein operates within carbohydrate degradation; 2-deoxy-D-ribose 1-phosphate degradation; D-glyceraldehyde 3-phosphate and acetaldehyde from 2-deoxy-alpha-D-ribose 1-phosphate: step 2/2. Its function is as follows. Catalyzes a reversible aldol reaction between acetaldehyde and D-glyceraldehyde 3-phosphate to generate 2-deoxy-D-ribose 5-phosphate. The sequence is that of Deoxyribose-phosphate aldolase from Listeria innocua serovar 6a (strain ATCC BAA-680 / CLIP 11262).